Here is a 186-residue protein sequence, read N- to C-terminus: Thioredoxin M2, chloroplastic (186 aa).

The N-terminal 72 residues, 1-72 (MAAFTCTSRP…RVSRLRRAVV (72 aa)), are a transit peptide targeting the chloroplast. One can recognise a Thioredoxin domain in the interval 73-186 (CEAQETTTDI…LTSSLDKFLP (114 aa)). Active-site nucleophile residues include Cys-110 and Cys-113. An intrachain disulfide couples Cys-110 to Cys-113.

The protein belongs to the thioredoxin family. Plant M-type subfamily. As to quaternary structure, interacts with G6PD1 and G6PD4. Interacts with PGL3.

The protein resides in the plastid. Its subcellular location is the chloroplast stroma. In terms of biological role, thiol-disulfide oxidoreductase that may participate in various redox reactions. May activate NADP-malate dehydrogenase. The protein is Thioredoxin M2, chloroplastic of Arabidopsis thaliana (Mouse-ear cress).